A 465-amino-acid chain; its full sequence is 6-phospho-beta-glucosidase (465 aa).

Glu173 functions as the Proton donor in the catalytic mechanism. Catalysis depends on Glu362, which acts as the Nucleophile.

The protein belongs to the glycosyl hydrolase 1 family.

The catalysed reaction is 6-phospho-beta-D-glucosyl-(1-&gt;4)-D-glucose + H2O = D-glucose 6-phosphate + D-glucose. Its pathway is carbohydrate metabolism; beta-glucoside metabolism. The sequence is that of 6-phospho-beta-glucosidase (arbB) from Dickeya chrysanthemi (Pectobacterium chrysanthemi).